The following is a 329-amino-acid chain: GMP reductase (329 aa).

The Thioimidate intermediate role is filled by cysteine 178. Position 207–230 (isoleucine 207–cysteine 230) interacts with NADP(+).

It belongs to the IMPDH/GMPR family. GuaC type 2 subfamily.

The enzyme catalyses IMP + NH4(+) + NADP(+) = GMP + NADPH + 2 H(+). Its function is as follows. Catalyzes the irreversible NADPH-dependent deamination of GMP to IMP. It functions in the conversion of nucleobase, nucleoside and nucleotide derivatives of G to A nucleotides, and in maintaining the intracellular balance of A and G nucleotides. The polypeptide is GMP reductase (Lacticaseibacillus paracasei (strain ATCC 334 / BCRC 17002 / CCUG 31169 / CIP 107868 / KCTC 3260 / NRRL B-441) (Lactobacillus paracasei)).